Reading from the N-terminus, the 337-residue chain is Holliday junction branch migration complex subunit RuvB (337 aa).

Residues 1–180 (MTRLISADKS…FGVISRLEFY (180 aa)) are large ATPase domain (RuvB-L). Residues L19, R20, G61, K64, T65, T66, 127-129 (EDF), R170, Y180, and R217 each bind ATP. T65 is a binding site for Mg(2+). Residues 181 to 251 (THEELAFIIT…VADQALALLE (71 aa)) are small ATPAse domain (RuvB-S). A head domain (RuvB-H) region spans residues 254–337 (DMGFDMMDRA…APEPPQGKLF (84 aa)). The DNA site is built by R309 and R314.

Belongs to the RuvB family. In terms of assembly, homohexamer. Forms an RuvA(8)-RuvB(12)-Holliday junction (HJ) complex. HJ DNA is sandwiched between 2 RuvA tetramers; dsDNA enters through RuvA and exits via RuvB. An RuvB hexamer assembles on each DNA strand where it exits the tetramer. Each RuvB hexamer is contacted by two RuvA subunits (via domain III) on 2 adjacent RuvB subunits; this complex drives branch migration. In the full resolvosome a probable DNA-RuvA(4)-RuvB(12)-RuvC(2) complex forms which resolves the HJ.

It localises to the cytoplasm. The enzyme catalyses ATP + H2O = ADP + phosphate + H(+). The RuvA-RuvB-RuvC complex processes Holliday junction (HJ) DNA during genetic recombination and DNA repair, while the RuvA-RuvB complex plays an important role in the rescue of blocked DNA replication forks via replication fork reversal (RFR). RuvA specifically binds to HJ cruciform DNA, conferring on it an open structure. The RuvB hexamer acts as an ATP-dependent pump, pulling dsDNA into and through the RuvAB complex. RuvB forms 2 homohexamers on either side of HJ DNA bound by 1 or 2 RuvA tetramers; 4 subunits per hexamer contact DNA at a time. Coordinated motions by a converter formed by DNA-disengaged RuvB subunits stimulates ATP hydrolysis and nucleotide exchange. Immobilization of the converter enables RuvB to convert the ATP-contained energy into a lever motion, pulling 2 nucleotides of DNA out of the RuvA tetramer per ATP hydrolyzed, thus driving DNA branch migration. The RuvB motors rotate together with the DNA substrate, which together with the progressing nucleotide cycle form the mechanistic basis for DNA recombination by continuous HJ branch migration. Branch migration allows RuvC to scan DNA until it finds its consensus sequence, where it cleaves and resolves cruciform DNA. The chain is Holliday junction branch migration complex subunit RuvB from Citrifermentans bemidjiense (strain ATCC BAA-1014 / DSM 16622 / JCM 12645 / Bem) (Geobacter bemidjiensis).